A 510-amino-acid chain; its full sequence is NAD(P)H-quinone oxidoreductase subunit 2 A, chloroplastic (510 aa).

Transmembrane regions (helical) follow at residues 24–44 (LLLFHGSFIFPECILIFGLIL), 57–77 (IPWLYFISSTSLVMSIAALLF), 99–119 (IFQFLILLCSTLCIPLSVEYI), 124–144 (MAITEFLLFVLTATLGGMFLC), 149–169 (LITIFVAPECFSLCSYLLSGY), 183–203 (YLLMGGASSSILVHGFSWLYG), 227–247 (PGISIALIFITVGIGFKLSLA), 295–315 (WHLLLEILAILSMILGNLIAI), 323–343 (MLAYSSIGQIGYVIIGIIVGD), 354–374 (YMLFYISMNLGTFACIVSFGL), 395–415 (ALSLALCLLSLGGLPPLAGFF), 418–438 (LHLFWCGWQAGLYFLVSIGLL), and 484–504 (MIVCVIASTIPGISMNPIIAI).

The protein belongs to the complex I subunit 2 family. NDH is composed of at least 16 different subunits, 5 of which are encoded in the nucleus.

It is found in the plastid. The protein localises to the chloroplast thylakoid membrane. It carries out the reaction a plastoquinone + NADH + (n+1) H(+)(in) = a plastoquinol + NAD(+) + n H(+)(out). The enzyme catalyses a plastoquinone + NADPH + (n+1) H(+)(in) = a plastoquinol + NADP(+) + n H(+)(out). In terms of biological role, NDH shuttles electrons from NAD(P)H:plastoquinone, via FMN and iron-sulfur (Fe-S) centers, to quinones in the photosynthetic chain and possibly in a chloroplast respiratory chain. The immediate electron acceptor for the enzyme in this species is believed to be plastoquinone. Couples the redox reaction to proton translocation, and thus conserves the redox energy in a proton gradient. In Ranunculus macranthus (Large buttercup), this protein is NAD(P)H-quinone oxidoreductase subunit 2 A, chloroplastic.